The sequence spans 121 residues: Ribonuclease P protein component (121 aa).

Belongs to the RnpA family. In terms of assembly, consists of a catalytic RNA component (M1 or rnpB) and a protein subunit.

The enzyme catalyses Endonucleolytic cleavage of RNA, removing 5'-extranucleotides from tRNA precursor.. RNaseP catalyzes the removal of the 5'-leader sequence from pre-tRNA to produce the mature 5'-terminus. It can also cleave other RNA substrates such as 4.5S RNA. The protein component plays an auxiliary but essential role in vivo by binding to the 5'-leader sequence and broadening the substrate specificity of the ribozyme. This is Ribonuclease P protein component from Lactobacillus delbrueckii subsp. bulgaricus (strain ATCC 11842 / DSM 20081 / BCRC 10696 / JCM 1002 / NBRC 13953 / NCIMB 11778 / NCTC 12712 / WDCM 00102 / Lb 14).